We begin with the raw amino-acid sequence, 139 residues long: Sec-independent protein translocase protein TatB (139 aa).

Residues methionine 1–glycine 21 traverse the membrane as a helical segment. A compositionally biased stretch (basic and acidic residues) spans glutamine 66–aspartate 86. The segment at glutamine 66–proline 139 is disordered.

The protein belongs to the TatB family. The Tat system comprises two distinct complexes: a TatABC complex, containing multiple copies of TatA, TatB and TatC subunits, and a separate TatA complex, containing only TatA subunits. Substrates initially bind to the TatABC complex, which probably triggers association of the separate TatA complex to form the active translocon.

The protein localises to the cell inner membrane. In terms of biological role, part of the twin-arginine translocation (Tat) system that transports large folded proteins containing a characteristic twin-arginine motif in their signal peptide across membranes. Together with TatC, TatB is part of a receptor directly interacting with Tat signal peptides. TatB may form an oligomeric binding site that transiently accommodates folded Tat precursor proteins before their translocation. In Chromohalobacter salexigens (strain ATCC BAA-138 / DSM 3043 / CIP 106854 / NCIMB 13768 / 1H11), this protein is Sec-independent protein translocase protein TatB.